Reading from the N-terminus, the 263-residue chain is Hydroxyethylthiazole kinase 1 (263 aa).

Methionine 42 is a binding site for substrate. Lysine 118 and threonine 164 together coordinate ATP. Glycine 191 lines the substrate pocket.

It belongs to the Thz kinase family. Mg(2+) serves as cofactor.

The catalysed reaction is 5-(2-hydroxyethyl)-4-methylthiazole + ATP = 4-methyl-5-(2-phosphooxyethyl)-thiazole + ADP + H(+). It participates in cofactor biosynthesis; thiamine diphosphate biosynthesis; 4-methyl-5-(2-phosphoethyl)-thiazole from 5-(2-hydroxyethyl)-4-methylthiazole: step 1/1. Functionally, catalyzes the phosphorylation of the hydroxyl group of 4-methyl-5-beta-hydroxyethylthiazole (THZ). The protein is Hydroxyethylthiazole kinase 1 of Clostridium botulinum (strain Kyoto / Type A2).